The chain runs to 1854 residues: Dystrophin, isoform D (1854 aa).

Disordered stretches follow at residues 1 to 65, 84 to 161, 240 to 352, 516 to 548, 595 to 650, 716 to 740, 783 to 830, and 1012 to 1036; these read MTTT…PIYA, GSTT…YEMP, QSPT…MSPA, LKPTSTLKRNGTDSLVTSNTAAKPEVEATPTPS, TPGG…TSES, VMSKSNSSLGSVTTPSSATTTPSTA, LKLQ…STTP, and VSDTSDTEANHDSDSRYMSAEEQSR. Low complexity-rich tracts occupy residues 11-37 and 84-96; these read QRQQQHQQHQQQQLQHQQQQQQQQQHQ and GSTTQQQQALQSS. The segment covering 143–157 has biased composition (polar residues); it reads GLSSAQPATSASSGN. A compositionally biased stretch (low complexity) spans 276-296; sequence QQQQQQQQAGINGQINGNGNQ. Polar residues-rich tracts occupy residues 331 to 345 and 518 to 536; these read TLSRQKSPKKSSSAD and PTSTLKRNGTDSLVTSNTA. The span at 595-606 shows a compositional bias: gly residues; sequence TPGGGVVGGQAA. Positions 716 to 727 are enriched in polar residues; the sequence is VMSKSNSSLGSV. 2 stretches are compositionally biased toward low complexity: residues 728–740 and 783–814; these read TTPSSATTTPSTA and LKLQQQHQAHQQQQLPAHQQQQHQQQQQQQIQ. Residues 815-830 are compositionally biased toward polar residues; that stretch reads NGFASDDNSSSCSTTP. Spectrin repeat units lie at residues 936 to 1069 and 1072 to 1176; these read EHWN…RLDE and TKMR…VLCQ. The disordered stretch occupies residues 1179 to 1209; that stretch reads AQQTHENGDDGRTTSNSGTIGPLPNLGQSVK. Residues 1206-1239 enclose the WW domain; that stretch reads QSVKPPWERATTAANVPYYIDHERETTHWDHPEM. A ZZ-type zinc finger spans residues 1464–1520; it reads KHQAKCNICKEYPIVGFRYRCLKCFNFDMCQKCFFFGRNAKNHKLTHPMHEYCTTTT. Cys-1469, Cys-1472, Cys-1484, Cys-1487, Cys-1493, Cys-1496, His-1506, and His-1510 together coordinate Zn(2+). Phosphoserine is present on Ser-1564. 2 disordered regions span residues 1673–1701 and 1744–1854; these read EQSGMPEDSNGMQHSSSSMTGLSGQGEQG and DEPN…ELQK. Polar residues-rich tracts occupy residues 1682–1694 and 1765–1796; these read NGMQHSSSSMTGL and ALNSKPNTLQTRSVTASQLNTDSPAKMNQQNG. A compositionally biased stretch (acidic residues) spans 1815 to 1826; that stretch reads QELESINDDLED. A compositionally biased stretch (low complexity) spans 1827–1845; sequence SSSSNTTNTTTTTTTTATT.

In terms of assembly, component of the dystrophin associated protein complex (DAPC). Interacts with Dg, via the Dg WW domain binding sites. In terms of tissue distribution, during embryogenesis and in third instar larvae, expression is seen in pericardial cells of the dorsal vessel and in the ventral nerve cord. Expression is absent from both the embryonic and larval musculature.

The protein resides in the cell membrane. Its subcellular location is the sarcolemma. The protein localises to the cytoplasm. It localises to the cytoskeleton. Functionally, required for the maintenance of appropriate synaptic retrograde communication and the stabilization of muscle cell architecture or physiology. May play a role in anchoring the cytoskeleton to the plasma membrane. The chain is Dystrophin, isoform D (Dys) from Drosophila melanogaster (Fruit fly).